Consider the following 242-residue polypeptide: Probable L-ribulose-5-phosphate 4-epimerase UlaF (242 aa).

Residues 31-32 (GN), 48-49 (SG), and 78-79 (SS) each bind substrate. Residues aspartate 80, histidine 99, and histidine 101 each coordinate Zn(2+). The active-site Proton donor/acceptor is aspartate 124. Histidine 175 serves as a coordination point for Zn(2+). Residue tyrosine 234 is the Proton donor/acceptor of the active site.

This sequence belongs to the aldolase class II family. AraD/FucA subfamily. Zn(2+) is required as a cofactor.

The catalysed reaction is L-ribulose 5-phosphate = D-xylulose 5-phosphate. It functions in the pathway cofactor degradation; L-ascorbate degradation; D-xylulose 5-phosphate from L-ascorbate: step 4/4. Functionally, catalyzes the isomerization of L-ribulose 5-phosphate to D-xylulose 5-phosphate. Is involved in the anaerobic L-ascorbate utilization. In Mycoplasma pneumoniae (strain ATCC 29342 / M129 / Subtype 1) (Mycoplasmoides pneumoniae), this protein is Probable L-ribulose-5-phosphate 4-epimerase UlaF.